Reading from the N-terminus, the 88-residue chain is Large ribosomal subunit protein bL27 (88 aa).

The interval 1 to 23 is disordered; sequence MAHKKAGGSSRNGRDSAGRRLGV.

This sequence belongs to the bacterial ribosomal protein bL27 family.

The protein is Large ribosomal subunit protein bL27 of Methylorubrum populi (strain ATCC BAA-705 / NCIMB 13946 / BJ001) (Methylobacterium populi).